Here is a 547-residue protein sequence, read N- to C-terminus: Probable pectinesterase/pectinesterase inhibitor 12 (547 aa).

The first 23 residues, 1 to 23, serve as a signal peptide directing secretion; that stretch reads MALSSFNLSSLLFLLFFTPSVFS. The interval 31-185 is pectinesterase inhibitor 12; that stretch reads NPHETSATSF…YKHISNSLSA (155 aa). N-linked (GlcNAc...) asparagine glycans are attached at residues asparagine 131, asparagine 247, asparagine 260, and asparagine 303. Residues 237 to 533 form a pectinesterase 12 region; the sequence is SLVVAADGTG…FTATEFITGD (297 aa). The substrate site is built by threonine 312 and glutamine 342. Aspartate 365 acts as the Proton donor; for pectinesterase activity in catalysis. A disulfide bridge links cysteine 379 with cysteine 399. Aspartate 386 serves as the catalytic Nucleophile; for pectinesterase activity. 2 N-linked (GlcNAc...) asparagine glycosylation sites follow: asparagine 432 and asparagine 443. Arginine 454 and tryptophan 456 together coordinate substrate. Residue asparagine 523 is glycosylated (N-linked (GlcNAc...) asparagine).

In the N-terminal section; belongs to the PMEI family. This sequence in the C-terminal section; belongs to the pectinesterase family. In terms of tissue distribution, expressed in siliques.

It localises to the secreted. The protein resides in the cell wall. The enzyme catalyses [(1-&gt;4)-alpha-D-galacturonosyl methyl ester](n) + n H2O = [(1-&gt;4)-alpha-D-galacturonosyl](n) + n methanol + n H(+). It participates in glycan metabolism; pectin degradation; 2-dehydro-3-deoxy-D-gluconate from pectin: step 1/5. Acts in the modification of cell walls via demethylesterification of cell wall pectin. The polypeptide is Probable pectinesterase/pectinesterase inhibitor 12 (PME12) (Arabidopsis thaliana (Mouse-ear cress)).